A 617-amino-acid polypeptide reads, in one-letter code: Probable translation initiation factor IF-2 (617 aa).

Residues 14 to 231 (LRQPIVVVLG…VLAGLTQTYL (218 aa)) enclose the tr-type G domain. Residues 23–30 (GHVDHGKT) form a G1 region. 23 to 30 (GHVDHGKT) contacts GTP. Positions 48 to 52 (GITQH) are G2. The G3 stretch occupies residues 87–90 (DTPG). GTP is bound by residues 87–91 (DTPGH) and 141–144 (NKID). The segment at 141–144 (NKID) is G4. Positions 209-211 (SAR) are G5.

It belongs to the TRAFAC class translation factor GTPase superfamily. Classic translation factor GTPase family. IF-2 subfamily.

Function in general translation initiation by promoting the binding of the formylmethionine-tRNA to ribosomes. Seems to function along with eIF-2. In Aeropyrum pernix (strain ATCC 700893 / DSM 11879 / JCM 9820 / NBRC 100138 / K1), this protein is Probable translation initiation factor IF-2 (infB).